An 88-amino-acid polypeptide reads, in one-letter code: Small ribosomal subunit protein bS20 (88 aa).

The segment at 1-25 (MANSAQARKRVRQNNTRRQHAASQR) is disordered. Basic residues predominate over residues 7–20 (ARKRVRQNNTRRQH).

It belongs to the bacterial ribosomal protein bS20 family.

In terms of biological role, binds directly to 16S ribosomal RNA. In Psychrobacter sp. (strain PRwf-1), this protein is Small ribosomal subunit protein bS20.